A 273-amino-acid polypeptide reads, in one-letter code: Glutamate racemase (273 aa).

Residues 11–12 and 43–44 each bind substrate; these read DS and YG. Cys-74 serves as the catalytic Proton donor/acceptor. 75 to 76 is a binding site for substrate; the sequence is NT. Cys-185 acts as the Proton donor/acceptor in catalysis. 186-187 provides a ligand contact to substrate; sequence TH.

The protein belongs to the aspartate/glutamate racemases family. Homodimer.

The enzyme catalyses L-glutamate = D-glutamate. Its pathway is cell wall biogenesis; peptidoglycan biosynthesis. Functionally, provides the (R)-glutamate required for cell wall biosynthesis. The polypeptide is Glutamate racemase (Enterococcus faecalis (strain ATCC 700802 / V583)).